A 126-amino-acid chain; its full sequence is MEKDLKFTASHEWVRENGDGTVTVGISNHAQGLLGDVVFVDLPDVDDEVTAGENFSLVESVKAASDIYAPISGVIVEINEELEDSPELVNEEPYEGGWIARIKLSDDGDLENLIPGDQYLESIEEE.

One can recognise a Lipoyl-binding domain in the interval 21–103 (TVTVGISNHA…YEGGWIARIK (83 aa)). N6-lipoyllysine is present on Lys-62.

The protein belongs to the GcvH family. The glycine cleavage system is composed of four proteins: P, T, L and H. (R)-lipoate is required as a cofactor.

In terms of biological role, the glycine cleavage system catalyzes the degradation of glycine. The H protein shuttles the methylamine group of glycine from the P protein to the T protein. The sequence is that of Glycine cleavage system H protein from Aliivibrio salmonicida (strain LFI1238) (Vibrio salmonicida (strain LFI1238)).